The following is an 860-amino-acid chain: Leucine--tRNA ligase (860 aa).

The 'HIGH' region motif lies at 42–52; it reads PYPSGRLHMGH. The short motif at 619–623 is the 'KMSKS' region element; it reads KMSKS. An ATP-binding site is contributed by K622.

This sequence belongs to the class-I aminoacyl-tRNA synthetase family.

The protein resides in the cytoplasm. It catalyses the reaction tRNA(Leu) + L-leucine + ATP = L-leucyl-tRNA(Leu) + AMP + diphosphate. The protein is Leucine--tRNA ligase of Edwardsiella ictaluri (strain 93-146).